We begin with the raw amino-acid sequence, 64 residues long: Potassium channel toxin kappa-KTx 3.1 (64 aa).

An N-terminal signal peptide occupies residues 1–26 (MKSTLMTASVLILVLLSIVDYASVYA). The propeptide occupies 27–36 (EFIDSEISLE). Disulfide bonds link Cys43–Cys61 and Cys47–Cys57.

The protein belongs to the short scorpion toxin superfamily. Potassium channel inhibitor kappa-KTx family. Kappa-KTx 3 subfamily. Expressed by the venom gland.

Its subcellular location is the secreted. Functionally, potassium channel inhibitor (Kv). The protein is Potassium channel toxin kappa-KTx 3.1 of Heterometrus petersii (Asian forest scorpion).